A 534-amino-acid polypeptide reads, in one-letter code: uncharacterized protein (534 aa).

4 disordered regions span residues 1-93 (MSSS…DDTG), 123-260 (SPES…LSSA), 313-349 (AAAT…TFPS), and 383-505 (PWGA…QGCP). Residues 35–45 (GPGPDPGPEPG) show a composition bias toward pro residues. Residues Ser-87 and Ser-123 each carry the phosphoserine modification. The segment covering 145-161 (RGAAAQRCGEAARAEAG) has biased composition (low complexity). A compositionally biased stretch (basic and acidic residues) spans 230 to 239 (SPKDPRDTPR).

This is an uncharacterized protein from Bos taurus (Bovine).